The following is a 709-amino-acid chain: Frizzled-6 (709 aa).

An N-terminal signal peptide occupies residues 1-18 (MERSPFLLACILLPLVRG). The 114-residue stretch at 19-132 (HSLFTCEPIT…CNRLPHCDDT (114 aa)) folds into the FZ domain. Topologically, residues 19–201 (HSLFTCEPIT…SDELDFAKSF (183 aa)) are extracellular. Intrachain disulfides connect cysteine 24-cysteine 85, cysteine 32-cysteine 78, cysteine 69-cysteine 106, cysteine 95-cysteine 129, and cysteine 99-cysteine 123. A glycan (N-linked (GlcNAc...) asparagine) is linked at asparagine 38. A helical transmembrane segment spans residues 202–222 (IGIVSIFCLCATLFTFLTFLI). Residues 223-233 (DVRRFRYPERP) are Cytoplasmic-facing. The helical transmembrane segment at 234 to 254 (IIYYSVCYSIVSLMYFVGFLL) threads the bilayer. At 255–284 (GNSTACNKADEKLELGDTVVLGSKNKACSV) the chain is on the extracellular side. A glycan (N-linked (GlcNAc...) asparagine) is linked at asparagine 256. The chain crosses the membrane as a helical span at residues 285–305 (VFMFLYFFTMAGTVWWVILTI). Residues 306–324 (TWFLAAGRKWSCEAIEQKA) lie on the Cytoplasmic side of the membrane. A helical transmembrane segment spans residues 325–345 (VWFHAVAWGAPGFLTVMLLAM). The Extracellular segment spans residues 346-370 (NKVEGDNISGVCFVGLYDLDASRYF). Asparagine 352 carries N-linked (GlcNAc...) asparagine glycosylation. A helical membrane pass occupies residues 371–391 (VLLPLCLCVFVGLSLLLAGII). Residues 392–416 (SLNHVRQVIQHDGRNQEKLKKFMIR) are Cytoplasmic-facing. The chain crosses the membrane as a helical span at residues 417–437 (IGVFSGLYLVPLVTLLGCYVY). The Extracellular portion of the chain corresponds to 438–473 (ELVNRITWEMTWFSDHCHQYRIPCPYQANPKARPEL). The chain crosses the membrane as a helical span at residues 474-494 (ALFMIKYLMTLIVGISAVFWV). The Cytoplasmic segment spans residues 495–709 (GSKKTCTEWA…EQGAGSHSDA (215 aa)). The Lys-Thr-X-X-X-Trp motif, mediates interaction with the PDZ domain of Dvl family members motif lies at 498 to 503 (KTCTEW). Positions 583 to 594 (QETSTEVHTSPE) are enriched in polar residues. A disordered region spans residues 583–709 (QETSTEVHTS…EQGAGSHSDA (127 aa)). The segment covering 596-616 (SVKEGRADRANTPSAKDRDCG) has biased composition (basic and acidic residues). The span at 620–629 (GPSSKLSGNR) shows a compositional bias: polar residues. Over residues 630–644 (NGRESRAGGLKERSN) the composition is skewed to basic and acidic residues. A Phosphoserine modification is found at serine 656. The segment covering 669-690 (CSTSQAASSPEPTSLKGSTSLP) has biased composition (polar residues). A compositionally biased stretch (basic and acidic residues) spans 697-709 (ARKEQGAGSHSDA).

The protein belongs to the G-protein coupled receptor Fz/Smo family. In terms of assembly, interacts with LMBR1L. In terms of processing, ubiquitinated by ZNRF3, leading to its degradation by the proteasome. As to expression, expressed in both hair cells and supporting cells in the utricle, saccule, cristae and the organ of Corti in the inner ear (at protein level).

It localises to the membrane. Its subcellular location is the cell membrane. The protein localises to the cell surface. The protein resides in the apical cell membrane. It is found in the cytoplasmic vesicle membrane. It localises to the endoplasmic reticulum membrane. In terms of biological role, receptor for Wnt proteins. Most of frizzled receptors are coupled to the beta-catenin canonical signaling pathway, which leads to the activation of disheveled proteins, inhibition of GSK-3 kinase, nuclear accumulation of beta-catenin and activation of Wnt target genes. A second signaling pathway involving PKC and calcium fluxes has been seen for some family members, but it is not yet clear if it represents a distinct pathway or if it can be integrated in the canonical pathway, as PKC seems to be required for Wnt-mediated inactivation of GSK-3 kinase. Both pathways seem to involve interactions with G-proteins. Activation by Wnt5A stimulates PKC activity via a G-protein-dependent mechanism. Involved in transduction and intercellular transmission of polarity information during tissue morphogenesis and/or in differentiated tissues. Together with FZD3, is involved in the neural tube closure and plays a role in the regulation of the establishment of planar cell polarity (PCP), particularly in the orientation of asymmetric bundles of stereocilia on the apical faces of a subset of auditory and vestibular sensory cells located in the inner ear. The polypeptide is Frizzled-6 (Fzd6) (Mus musculus (Mouse)).